A 180-amino-acid polypeptide reads, in one-letter code: Ribulose bisphosphate carboxylase small subunit, chloroplastic (180 aa).

The N-terminal 56 residues, 1–56, are a transit peptide targeting the chloroplast; it reads MASSVLSSAAVATRSNVAQANMVAPFTGLKSAASFPVSRKQNLDITSIASNGGRVQ.

Belongs to the RuBisCO small chain family. In terms of assembly, heterohexadecamer of 8 large and 8 small subunits. As to quaternary structure, (Microbial infection) Binds to tobamovirus movement protein at the plasmodesmata (e.g. tomato mosaic virus MP AC P69513); this interaction seems required for viral systemic movement.

The protein resides in the plastid. The protein localises to the chloroplast. It is found in the cell junction. It localises to the plasmodesma. RuBisCO catalyzes two reactions: the carboxylation of D-ribulose 1,5-bisphosphate, the primary event in carbon dioxide fixation, as well as the oxidative fragmentation of the pentose substrate. Both reactions occur simultaneously and in competition at the same active site. Although the small subunit is not catalytic it is essential for maximal activity. Involved in antiviral defenses. Functionally, (Microbial infection) Required for tobamovirus movement (e.g. tobacco mosaic virus (TMV)). The chain is Ribulose bisphosphate carboxylase small subunit, chloroplastic from Nicotiana benthamiana.